Reading from the N-terminus, the 66-residue chain is DNA gyrase inhibitor YacG (66 aa).

The Zn(2+) site is built by Cys-9, Cys-12, Cys-28, and Cys-32. Residues 45–66 form a disordered region; sequence HKIAGSEESEDELYSGDLEPRH.

This sequence belongs to the DNA gyrase inhibitor YacG family. Interacts with GyrB. Requires Zn(2+) as cofactor.

In terms of biological role, inhibits all the catalytic activities of DNA gyrase by preventing its interaction with DNA. Acts by binding directly to the C-terminal domain of GyrB, which probably disrupts DNA binding by the gyrase. In Pseudomonas putida (strain ATCC 47054 / DSM 6125 / CFBP 8728 / NCIMB 11950 / KT2440), this protein is DNA gyrase inhibitor YacG.